An 806-amino-acid chain; its full sequence is Leucine--tRNA ligase (806 aa).

The 'HIGH' region motif lies at 38–48 (PYPSGEIHMGH). Positions 572-576 (KMSKS) match the 'KMSKS' region motif. ATP is bound at residue Lys-575.

Belongs to the class-I aminoacyl-tRNA synthetase family.

The protein resides in the cytoplasm. It carries out the reaction tRNA(Leu) + L-leucine + ATP = L-leucyl-tRNA(Leu) + AMP + diphosphate. The polypeptide is Leucine--tRNA ligase (Helicobacter acinonychis (strain Sheeba)).